The sequence spans 334 residues: Nucleoid-associated protein YpsIP31758_2721 (334 aa).

This sequence belongs to the YejK family.

The protein localises to the cytoplasm. The protein resides in the nucleoid. The polypeptide is Nucleoid-associated protein YpsIP31758_2721 (Yersinia pseudotuberculosis serotype O:1b (strain IP 31758)).